Reading from the N-terminus, the 156-residue chain is Ribosomal RNA large subunit methyltransferase H (156 aa).

S-adenosyl-L-methionine-binding positions include leucine 73, glycine 104, and 123 to 128 (LSSLTL).

Belongs to the RNA methyltransferase RlmH family. As to quaternary structure, homodimer.

The protein resides in the cytoplasm. The catalysed reaction is pseudouridine(1915) in 23S rRNA + S-adenosyl-L-methionine = N(3)-methylpseudouridine(1915) in 23S rRNA + S-adenosyl-L-homocysteine + H(+). Its function is as follows. Specifically methylates the pseudouridine at position 1915 (m3Psi1915) in 23S rRNA. This Ralstonia pickettii (strain 12J) protein is Ribosomal RNA large subunit methyltransferase H.